Consider the following 381-residue polypeptide: Lipid-A-disaccharide synthase (381 aa).

Belongs to the LpxB family.

It carries out the reaction a lipid X + a UDP-2-N,3-O-bis[(3R)-3-hydroxyacyl]-alpha-D-glucosamine = a lipid A disaccharide + UDP + H(+). Its pathway is bacterial outer membrane biogenesis; LPS lipid A biosynthesis. In terms of biological role, condensation of UDP-2,3-diacylglucosamine and 2,3-diacylglucosamine-1-phosphate to form lipid A disaccharide, a precursor of lipid A, a phosphorylated glycolipid that anchors the lipopolysaccharide to the outer membrane of the cell. The protein is Lipid-A-disaccharide synthase of Rickettsia bellii (strain OSU 85-389).